The primary structure comprises 342 residues: tRNA N6-adenosine threonylcarbamoyltransferase (342 aa).

Positions 119 and 123 each coordinate Fe cation. Residues 142–146 (VVSGG), aspartate 175, glycine 188, and asparagine 282 each bind substrate. Aspartate 310 is a binding site for Fe cation.

This sequence belongs to the KAE1 / TsaD family. Fe(2+) serves as cofactor.

Its subcellular location is the cytoplasm. It carries out the reaction L-threonylcarbamoyladenylate + adenosine(37) in tRNA = N(6)-L-threonylcarbamoyladenosine(37) in tRNA + AMP + H(+). Required for the formation of a threonylcarbamoyl group on adenosine at position 37 (t(6)A37) in tRNAs that read codons beginning with adenine. Is involved in the transfer of the threonylcarbamoyl moiety of threonylcarbamoyl-AMP (TC-AMP) to the N6 group of A37, together with TsaE and TsaB. TsaD likely plays a direct catalytic role in this reaction. In Moorella thermoacetica (strain ATCC 39073 / JCM 9320), this protein is tRNA N6-adenosine threonylcarbamoyltransferase.